The chain runs to 292 residues: Putative OX-2 membrane glycoprotein homolog (292 aa).

The N-terminal stretch at 1 to 18 is a signal peptide; that stretch reads MSPLMLRLLPLLCIIISA. One can recognise an Ig-like V-type domain in the interval 24–136; the sequence is PETSPSLVYE…TFTVDNEKTS (113 aa). Cysteine 42 and cysteine 126 are joined by a disulfide. N-linked (GlcNAc...) asparagine; by host glycans are attached at residues asparagine 45, asparagine 57, asparagine 72, and asparagine 195. Positions 147 to 237 constitute an Ig-like C2-type domain; that stretch reads PIVVLYFRYL…TNQKASALVT (91 aa). A helical membrane pass occupies residues 263-283; sequence VFTWIVPLILILIISVMVLLI.

The protein localises to the host membrane. This is Putative OX-2 membrane glycoprotein homolog (U85) from Human herpesvirus 6B (strain Z29) (HHV-6 variant B).